The sequence spans 238 residues: Demethylmenaquinone methyltransferase (238 aa).

S-adenosyl-L-methionine-binding positions include threonine 65, aspartate 85, and 109-110 (DA).

This sequence belongs to the class I-like SAM-binding methyltransferase superfamily. MenG/UbiE family.

The enzyme catalyses a 2-demethylmenaquinol + S-adenosyl-L-methionine = a menaquinol + S-adenosyl-L-homocysteine + H(+). The protein operates within quinol/quinone metabolism; menaquinone biosynthesis; menaquinol from 1,4-dihydroxy-2-naphthoate: step 2/2. In terms of biological role, methyltransferase required for the conversion of demethylmenaquinol (DMKH2) to menaquinol (MKH2). This is Demethylmenaquinone methyltransferase from Roseiflexus castenholzii (strain DSM 13941 / HLO8).